The primary structure comprises 737 residues: Phosphoribosylformylglycinamidine synthase subunit PurL (737 aa).

The active site involves histidine 48. The ATP site is built by tyrosine 51 and lysine 90. Glutamate 92 contributes to the Mg(2+) binding site. Residues 93 to 96 (SHNH) and arginine 115 each bind substrate. Histidine 94 serves as the catalytic Proton acceptor. Aspartate 116 serves as a coordination point for Mg(2+). Residue glutamine 244 coordinates substrate. Residue aspartate 272 coordinates Mg(2+). 316–318 (ESQ) contacts substrate. The ATP site is built by aspartate 500 and glycine 537. Residue asparagine 538 coordinates Mg(2+). Residue serine 540 participates in substrate binding.

Belongs to the FGAMS family. In terms of assembly, monomer. Part of the FGAM synthase complex composed of 1 PurL, 1 PurQ and 2 PurS subunits.

Its subcellular location is the cytoplasm. The catalysed reaction is N(2)-formyl-N(1)-(5-phospho-beta-D-ribosyl)glycinamide + L-glutamine + ATP + H2O = 2-formamido-N(1)-(5-O-phospho-beta-D-ribosyl)acetamidine + L-glutamate + ADP + phosphate + H(+). It functions in the pathway purine metabolism; IMP biosynthesis via de novo pathway; 5-amino-1-(5-phospho-D-ribosyl)imidazole from N(2)-formyl-N(1)-(5-phospho-D-ribosyl)glycinamide: step 1/2. Functionally, part of the phosphoribosylformylglycinamidine synthase complex involved in the purines biosynthetic pathway. Catalyzes the ATP-dependent conversion of formylglycinamide ribonucleotide (FGAR) and glutamine to yield formylglycinamidine ribonucleotide (FGAM) and glutamate. The FGAM synthase complex is composed of three subunits. PurQ produces an ammonia molecule by converting glutamine to glutamate. PurL transfers the ammonia molecule to FGAR to form FGAM in an ATP-dependent manner. PurS interacts with PurQ and PurL and is thought to assist in the transfer of the ammonia molecule from PurQ to PurL. The protein is Phosphoribosylformylglycinamidine synthase subunit PurL of Sulfurimonas denitrificans (strain ATCC 33889 / DSM 1251) (Thiomicrospira denitrificans (strain ATCC 33889 / DSM 1251)).